Here is a 202-residue protein sequence, read N- to C-terminus: uncharacterized protein (202 aa).

This is an uncharacterized protein from Archaeoglobus fulgidus (strain ATCC 49558 / DSM 4304 / JCM 9628 / NBRC 100126 / VC-16).